A 1407-amino-acid chain; its full sequence is DNA-directed RNA polymerase subunit beta' (1407 aa).

Positions 70, 72, 85, and 88 each coordinate Zn(2+). Residues Asp-460, Asp-462, and Asp-464 each coordinate Mg(2+). The Zn(2+) site is built by Cys-814, Cys-888, Cys-895, and Cys-898. Position 972 is an N6-acetyllysine (Lys-972).

Belongs to the RNA polymerase beta' chain family. As to quaternary structure, the RNAP catalytic core consists of 2 alpha, 1 beta, 1 beta' and 1 omega subunit. When a sigma factor is associated with the core the holoenzyme is formed, which can initiate transcription. The cofactor is Mg(2+). It depends on Zn(2+) as a cofactor.

The enzyme catalyses RNA(n) + a ribonucleoside 5'-triphosphate = RNA(n+1) + diphosphate. Its function is as follows. DNA-dependent RNA polymerase catalyzes the transcription of DNA into RNA using the four ribonucleoside triphosphates as substrates. In Shigella sonnei (strain Ss046), this protein is DNA-directed RNA polymerase subunit beta'.